The chain runs to 218 residues: 1-Cys peroxiredoxin PER1 (218 aa).

The Thioredoxin domain maps to 4 to 164 (LTIGDTVPNL…VVRAVDSLLT (161 aa)). The active-site Cysteine sulfenic acid (-SOH) intermediate is Cys46. The Bipartite nuclear localization signal signature appears at 194–217 (KKMFPQGFETADLPSKKGYLRFTK).

The protein belongs to the peroxiredoxin family. Prx6 subfamily.

The protein localises to the nucleus. The protein resides in the cytoplasm. The catalysed reaction is a hydroperoxide + [thioredoxin]-dithiol = an alcohol + [thioredoxin]-disulfide + H2O. In terms of biological role, thiol-specific peroxidase that catalyzes the reduction of hydrogen peroxide and organic hydroperoxides to water and alcohols, respectively. Seems to contribute to the inhibition of germination during stress. This chain is 1-Cys peroxiredoxin PER1 (PER1), found in Triticum aestivum (Wheat).